Reading from the N-terminus, the 621-residue chain is 1-deoxy-D-xylulose-5-phosphate synthase (621 aa).

Thiamine diphosphate-binding positions include His-80 and 121 to 123; that span reads GHS. Position 152 (Asp-152) interacts with Mg(2+). Thiamine diphosphate-binding positions include 153–154, Asn-181, Tyr-288, and Glu-370; that span reads GA. Asn-181 is a Mg(2+) binding site.

Belongs to the transketolase family. DXPS subfamily. Homodimer. Requires Mg(2+) as cofactor. Thiamine diphosphate is required as a cofactor.

The enzyme catalyses D-glyceraldehyde 3-phosphate + pyruvate + H(+) = 1-deoxy-D-xylulose 5-phosphate + CO2. It functions in the pathway metabolic intermediate biosynthesis; 1-deoxy-D-xylulose 5-phosphate biosynthesis; 1-deoxy-D-xylulose 5-phosphate from D-glyceraldehyde 3-phosphate and pyruvate: step 1/1. Catalyzes the acyloin condensation reaction between C atoms 2 and 3 of pyruvate and glyceraldehyde 3-phosphate to yield 1-deoxy-D-xylulose-5-phosphate (DXP). The chain is 1-deoxy-D-xylulose-5-phosphate synthase from Vibrio parahaemolyticus serotype O3:K6 (strain RIMD 2210633).